The primary structure comprises 95 residues: Large ribosomal subunit protein bL25 (95 aa).

A disordered region spans residues 1–20 (MSFKFNAEVRSKQGKGASRR).

The protein belongs to the bacterial ribosomal protein bL25 family. In terms of assembly, part of the 50S ribosomal subunit; part of the 5S rRNA/L5/L18/L25 subcomplex. Contacts the 5S rRNA. Binds to the 5S rRNA independently of L5 and L18.

Its function is as follows. This is one of the proteins that binds to the 5S RNA in the ribosome where it forms part of the central protuberance. The protein is Large ribosomal subunit protein bL25 of Histophilus somni (strain 129Pt) (Haemophilus somnus).